Here is a 285-residue protein sequence, read N- to C-terminus: 4-diphosphocytidyl-2-C-methyl-D-erythritol kinase (285 aa).

The active site involves Lys12. ATP is bound at residue 95–105 (PMGGGVGGGSS). The active site involves Asp137.

The protein belongs to the GHMP kinase family. IspE subfamily.

It carries out the reaction 4-CDP-2-C-methyl-D-erythritol + ATP = 4-CDP-2-C-methyl-D-erythritol 2-phosphate + ADP + H(+). The protein operates within isoprenoid biosynthesis; isopentenyl diphosphate biosynthesis via DXP pathway; isopentenyl diphosphate from 1-deoxy-D-xylulose 5-phosphate: step 3/6. Catalyzes the phosphorylation of the position 2 hydroxy group of 4-diphosphocytidyl-2C-methyl-D-erythritol. This Actinobacillus pleuropneumoniae serotype 3 (strain JL03) protein is 4-diphosphocytidyl-2-C-methyl-D-erythritol kinase.